Consider the following 486-residue polypeptide: Aspartyl/glutamyl-tRNA(Asn/Gln) amidotransferase subunit B (486 aa).

This sequence belongs to the GatB/GatE family. GatB subfamily. In terms of assembly, heterotrimer of A, B and C subunits.

It catalyses the reaction L-glutamyl-tRNA(Gln) + L-glutamine + ATP + H2O = L-glutaminyl-tRNA(Gln) + L-glutamate + ADP + phosphate + H(+). It carries out the reaction L-aspartyl-tRNA(Asn) + L-glutamine + ATP + H2O = L-asparaginyl-tRNA(Asn) + L-glutamate + ADP + phosphate + 2 H(+). In terms of biological role, allows the formation of correctly charged Asn-tRNA(Asn) or Gln-tRNA(Gln) through the transamidation of misacylated Asp-tRNA(Asn) or Glu-tRNA(Gln) in organisms which lack either or both of asparaginyl-tRNA or glutaminyl-tRNA synthetases. The reaction takes place in the presence of glutamine and ATP through an activated phospho-Asp-tRNA(Asn) or phospho-Glu-tRNA(Gln). The protein is Aspartyl/glutamyl-tRNA(Asn/Gln) amidotransferase subunit B of Leptospira borgpetersenii serovar Hardjo-bovis (strain JB197).